The chain runs to 150 residues: Putative biopolymer transport protein ExbB-like 2 (150 aa).

The next 3 membrane-spanning stretches (helical) occupy residues 5–25 (VDYG…AIAI), 63–83 (APYI…MDLG), and 97–117 (LALA…AIVI).

It belongs to the ExbB/TolQ family.

The protein localises to the cell inner membrane. The sequence is that of Putative biopolymer transport protein ExbB-like 2 from Helicobacter pylori (strain ATCC 700392 / 26695) (Campylobacter pylori).